A 928-amino-acid chain; its full sequence is BCAS3 microtubule associated cell migration factor (928 aa).

Residue methionine 1 is modified to N-acetylmethionine. The WD repeat unit spans residues 69-114 (DLNDTSRNLEFHEIHSTGNEPPLLIMIGYSDGMQVWSIPISGEAQE). Lysine 215 participates in a covalent cross-link: Glycyl lysine isopeptide (Lys-Gly) (interchain with G-Cter in SUMO1); alternate. A Glycyl lysine isopeptide (Lys-Gly) (interchain with G-Cter in SUMO2); alternate cross-link involves residue lysine 215. Required for recruitment to preautophagosomal structure in response to mitophagy stretches follow at residues 254–312 (RGGA…SRRS) and 437–560 (YGGQ…IKAP). 3 positions are modified to phosphoserine: serine 461, serine 480, and serine 488. Disordered stretches follow at residues 472–515 (TSKQ…PGNP) and 755–777 (TTVISSSSSVLQSHGPSDTPQPL). Composition is skewed to low complexity over residues 480–494 (SPVPGLSSSPSGSPL), 505–514 (NNFTNNNPGN), and 755–771 (TTVISSSSSVLQSHGPS). 3 positions are modified to phosphoserine: serine 838, serine 886, and serine 898. Residues 868–928 (ESPSRDVVGS…PLSLFPTGFP (61 aa)) form a disordered region. Residues 887 to 901 (IETLSNSSGSTSGSI) are compositionally biased toward low complexity.

This sequence belongs to the BCAS3 family. Interacts with histone H3, ESR1, KAT2B and PELP1; the interactions occur in a estrogen-dependent manner. Interacts with beta-tubulin and VIM. Interacts (via C-terminal) with PHAF1; the interaction is requrired for the association with the phagophore. As to expression, expressed in stomach, liver, lung, kidney, prostate, testis, thyroid gland, adrenal gland, brain, heart, skeletal muscle, colon, spleen, small intestine, placenta, blood leukocyte and mammary epithelial cells. Expressed in undifferentiated ES cells. Expressed in blood islands and nascent blood vessels derived from differentiated ES cells into embryoid bodies (BD). Expressed in endothelial cells. Not detected in brain. Expressed in brain tumors (at protein level). Expressed in brain. Highly expressed in breast cancers and in glioma cell lines.

The protein resides in the nucleus. Its subcellular location is the cytoplasm. The protein localises to the cytoskeleton. It is found in the preautophagosomal structure. Functionally, plays a role in angiogenesis. Participates in the regulation of cell polarity and directional endothelial cell migration by mediating both the activation and recruitment of CDC42 and the reorganization of the actin cytoskeleton at the cell leading edge. Promotes filipodia formation. Functions synergistically with PELP1 as a transcriptional coactivator of estrogen receptor-responsive genes. Stimulates histone acetyltransferase activity. Binds to chromatin. Plays a regulatory role in autophagic activity. In complex with PHAF1, associates with the preautophagosomal structure during both non-selective and selective autophagy. Probably binds phosphatidylinositol 3-phosphate (PtdIns3P) which would mediate the recruitment preautophagosomal structures. The polypeptide is BCAS3 microtubule associated cell migration factor (Homo sapiens (Human)).